The sequence spans 456 residues: Bifunctional protein GlmU (456 aa).

The segment at 1 to 229 (MLNNAMSVVI…LSEVEGVNNR (229 aa)) is pyrophosphorylase. Residues 11 to 14 (LAAG), Lys25, Gln76, 81 to 82 (GT), 103 to 105 (YGD), Gly140, Glu154, Asn169, and Asn227 contribute to the UDP-N-acetyl-alpha-D-glucosamine site. Residue Asp105 coordinates Mg(2+). A Mg(2+)-binding site is contributed by Asn227. Positions 230–250 (LQLSRLERVYQSEQAEKLLLA) are linker. The interval 251-456 (GVMLRDPARF…EGWRRPVKKK (206 aa)) is N-acetyltransferase. Positions 333 and 351 each coordinate UDP-N-acetyl-alpha-D-glucosamine. Residue His363 is the Proton acceptor of the active site. Residues Tyr366 and Asn377 each contribute to the UDP-N-acetyl-alpha-D-glucosamine site. Acetyl-CoA contacts are provided by residues Ala380, 386-387 (NY), Ser405, Ala423, and Arg440.

The protein in the N-terminal section; belongs to the N-acetylglucosamine-1-phosphate uridyltransferase family. It in the C-terminal section; belongs to the transferase hexapeptide repeat family. As to quaternary structure, homotrimer. Requires Mg(2+) as cofactor.

It localises to the cytoplasm. It carries out the reaction alpha-D-glucosamine 1-phosphate + acetyl-CoA = N-acetyl-alpha-D-glucosamine 1-phosphate + CoA + H(+). The catalysed reaction is N-acetyl-alpha-D-glucosamine 1-phosphate + UTP + H(+) = UDP-N-acetyl-alpha-D-glucosamine + diphosphate. It functions in the pathway nucleotide-sugar biosynthesis; UDP-N-acetyl-alpha-D-glucosamine biosynthesis; N-acetyl-alpha-D-glucosamine 1-phosphate from alpha-D-glucosamine 6-phosphate (route II): step 2/2. The protein operates within nucleotide-sugar biosynthesis; UDP-N-acetyl-alpha-D-glucosamine biosynthesis; UDP-N-acetyl-alpha-D-glucosamine from N-acetyl-alpha-D-glucosamine 1-phosphate: step 1/1. Its pathway is bacterial outer membrane biogenesis; LPS lipid A biosynthesis. In terms of biological role, catalyzes the last two sequential reactions in the de novo biosynthetic pathway for UDP-N-acetylglucosamine (UDP-GlcNAc). The C-terminal domain catalyzes the transfer of acetyl group from acetyl coenzyme A to glucosamine-1-phosphate (GlcN-1-P) to produce N-acetylglucosamine-1-phosphate (GlcNAc-1-P), which is converted into UDP-GlcNAc by the transfer of uridine 5-monophosphate (from uridine 5-triphosphate), a reaction catalyzed by the N-terminal domain. The sequence is that of Bifunctional protein GlmU from Escherichia coli O45:K1 (strain S88 / ExPEC).